We begin with the raw amino-acid sequence, 198 residues long: Heme oxygenase PigA (198 aa).

Residue histidine 26 coordinates heme b.

This sequence belongs to the heme oxygenase family.

It carries out the reaction heme b + 3 AH2 + 3 O2 + 2 H(+) = biliverdin IXbeta + CO + Fe(2+) + 3 A + 3 H2O. The catalysed reaction is heme b + 3 AH2 + 3 O2 + 3 H(+) = biliverdin IXdelta + CO + Fe(2+) + 3 A + 3 H2O. Its function is as follows. Involved in heme degradation. Catalyzes the degradation of heme to biliverdin, with the release of iron. Forms biliverdin delta (70%) and beta (30%). Under anaerobic conditions ferredoxin--NADP(+) reductase (fpr) can provide the necessary electrons; Bfd is not required. The chain is Heme oxygenase PigA from Pseudomonas aeruginosa (strain ATCC 15692 / DSM 22644 / CIP 104116 / JCM 14847 / LMG 12228 / 1C / PRS 101 / PAO1).